A 410-amino-acid polypeptide reads, in one-letter code: Lissencephaly-1 homolog A (410 aa).

Positions 7–39 (QRDELNRAIADYLRSNGYEEAYSVFKKEAELDM) constitute a LisH domain. A coiled-coil region spans residues 56–83 (TSVIRLQKKVMELESKLNEAKEEINIGG). WD repeat units lie at residues 106–145 (GHRS…FERT), 148–187 (GHTD…CIRT), 190–229 (GHDH…CVKT), 232–271 (GHRE…CKAE), 274–333 (EHEH…CLMT), 336–375 (GHDN…CTKT), and 378–410 (AHEH…WECR).

It belongs to the WD repeat LIS1/nudF family. In terms of assembly, can self-associate. Component of the cytosolic PAF-AH (I) heterotetrameric enzyme, which is composed of PAFAH1B1 (beta), PAFAH1B2 (alpha2) and PAFAH1B3 (alpha1) subunits. The catalytic activity of the enzyme resides in the alpha1 (PAFAH1B3) and alpha2 (PAFAH1B2) subunits, whereas the beta subunit (PAFAH1B1) has regulatory activity. Trimer formation is not essential for the catalytic activity. Interacts with dynein, dynactin, nde1 and ndel1.

The protein localises to the cytoplasm. Its subcellular location is the cytoskeleton. The protein resides in the microtubule organizing center. It is found in the centrosome. Regulatory subunit (beta subunit) of the cytosolic type I platelet-activating factor (PAF) acetylhydrolase (PAF-AH (I)), an enzyme that catalyzes the hydrolyze of the acetyl group at the sn-2 position of PAF and its analogs and participates in PAF inactivation. Regulates the PAF-AH (I) activity in a catalytic dimer composition-dependent manner. Positively regulates the activity of the minus-end directed microtubule motor protein dynein. May enhance dynein-mediated microtubule sliding by targeting dynein to the microtubule plus end. Required for several dynein- and microtubule-dependent processes such as the maintenance of Golgi integrity, the peripheral transport of microtubule fragments and the coupling of the nucleus and centrosome. May be required for proliferation of neuronal precursors and neuronal migration. This Danio rerio (Zebrafish) protein is Lissencephaly-1 homolog A (pafah1b1a).